We begin with the raw amino-acid sequence, 214 residues long: Adenylate kinase (214 aa).

10-15 (GAGKGT) is a binding site for ATP. An NMP region spans residues 30–59 (STGDMFRDHKARGTEIGKQVQAIMDGGGLV). AMP contacts are provided by residues Thr-31, Arg-36, 57–59 (GLV), 85–88 (GYPR), and Gln-92. The LID stretch occupies residues 126–163 (GRRSCPRCGAVYHVSQNPPRRAGYCDRDDAELVQREDD). Position 127 (Arg-127) interacts with ATP. Residues Cys-130 and Cys-133 each contribute to the Zn(2+) site. 136–137 (VY) serves as a coordination point for ATP. Residues Cys-150 and Asp-153 each contribute to the Zn(2+) site. 2 residues coordinate AMP: Arg-160 and Arg-171. Gly-199 provides a ligand contact to ATP.

It belongs to the adenylate kinase family. As to quaternary structure, monomer.

Its subcellular location is the cytoplasm. The enzyme catalyses AMP + ATP = 2 ADP. It participates in purine metabolism; AMP biosynthesis via salvage pathway; AMP from ADP: step 1/1. Its function is as follows. Catalyzes the reversible transfer of the terminal phosphate group between ATP and AMP. Plays an important role in cellular energy homeostasis and in adenine nucleotide metabolism. The sequence is that of Adenylate kinase from Anaeromyxobacter dehalogenans (strain 2CP-C).